A 296-amino-acid chain; its full sequence is GTP-binding protein GEM (296 aa).

Disordered regions lie at residues 1 to 20 (MTLN…PQQQ) and 37 to 68 (PHQY…SVIS). Residues 57–68 (SWSSDSTDSVIS) are compositionally biased toward low complexity. Residues 82–89 (GEQGVGKS) and 191–194 (NKSD) contribute to the GTP site. A calmodulin-binding region spans residues 266-285 (ARRFWGKIVAKNNKNMAFKL).

This sequence belongs to the small GTPase superfamily. RGK family. In terms of assembly, interacts with calmodulin in a Ca(2+)-dependent manner. Binds ROCK1. Post-translationally, phosphorylated on tyrosine residues. In terms of tissue distribution, most abundant in thymus, spleen, kidney, lung, and testis. Less abundant in heart, brain, liver and skeletal muscle.

It is found in the cell membrane. Functionally, could be a regulatory protein, possibly participating in receptor-mediated signal transduction at the plasma membrane. Has guanine nucleotide-binding activity but undetectable intrinsic GTPase activity. This chain is GTP-binding protein GEM (GEM), found in Homo sapiens (Human).